Consider the following 411-residue polypeptide: Exodeoxyribonuclease 7 large subunit (411 aa).

It belongs to the XseA family. In terms of assembly, heterooligomer composed of large and small subunits.

The protein localises to the cytoplasm. The enzyme catalyses Exonucleolytic cleavage in either 5'- to 3'- or 3'- to 5'-direction to yield nucleoside 5'-phosphates.. In terms of biological role, bidirectionally degrades single-stranded DNA into large acid-insoluble oligonucleotides, which are then degraded further into small acid-soluble oligonucleotides. The protein is Exodeoxyribonuclease 7 large subunit of Mycobacterium sp. (strain JLS).